Consider the following 205-residue polypeptide: Adenylyl-sulfate kinase (205 aa).

31–38 (GLSGAGKS) lines the ATP pocket. Residue Ser105 is the Phosphoserine intermediate of the active site.

The protein belongs to the APS kinase family.

The catalysed reaction is adenosine 5'-phosphosulfate + ATP = 3'-phosphoadenylyl sulfate + ADP + H(+). It functions in the pathway sulfur metabolism; hydrogen sulfide biosynthesis; sulfite from sulfate: step 2/3. Its function is as follows. Catalyzes the synthesis of activated sulfate. The sequence is that of Adenylyl-sulfate kinase from Shewanella baltica (strain OS155 / ATCC BAA-1091).